Consider the following 485-residue polypeptide: Mitochondrial metalloendopeptidase OMA1 (485 aa).

A mitochondrion-targeting transit peptide spans 1-16 (MKPSLKRRLLLLSRKF). Over 17–147 (AKASIRKLLR…GPGRWFQNPR (131 aa)) the chain is Mitochondrial matrix. Residues 148 to 168 (TVFTVVLVGSVGLITLIVGNT) form a helical membrane-spanning segment. The Mitochondrial intermembrane portion of the chain corresponds to 169–485 (ETIPYTKRTH…AGRTGVEGFL (317 aa)). A Zn(2+)-binding site is contributed by His-352. Glu-353 is an active-site residue. Zn(2+)-binding residues include His-356 and Glu-405. Residues 456–485 (KLLAQANVMEEALMIYREVQAGRTGVEGFL) form a required for protease activation region.

It belongs to the peptidase M48A family. In terms of assembly, homooligomer. Zn(2+) is required as a cofactor.

The protein resides in the mitochondrion inner membrane. Protease that is part of the quality control system in the inner membrane of mitochondria. Metalloendopeptidase that modulates the oxidative phosphorylation (OXPHOS) system and plant growth. Involved in tolerance mechanisms to heat, osmotic and oxidative stresses. This is Mitochondrial metalloendopeptidase OMA1 from Arabidopsis thaliana (Mouse-ear cress).